The following is a 273-amino-acid chain: Bifunctional protein FolD (273 aa).

Residues 149-151 (GLG) and Val215 each bind NADP(+).

This sequence belongs to the tetrahydrofolate dehydrogenase/cyclohydrolase family. In terms of assembly, homodimer.

The catalysed reaction is (6R)-5,10-methylene-5,6,7,8-tetrahydrofolate + NADP(+) = (6R)-5,10-methenyltetrahydrofolate + NADPH. It catalyses the reaction (6R)-5,10-methenyltetrahydrofolate + H2O = (6R)-10-formyltetrahydrofolate + H(+). It participates in one-carbon metabolism; tetrahydrofolate interconversion. Functionally, catalyzes the oxidation of 5,10-methylenetetrahydrofolate to 5,10-methenyltetrahydrofolate and then the hydrolysis of 5,10-methenyltetrahydrofolate to 10-formyltetrahydrofolate. This is Bifunctional protein FolD from Mycoplasma genitalium (strain ATCC 33530 / DSM 19775 / NCTC 10195 / G37) (Mycoplasmoides genitalium).